A 294-amino-acid polypeptide reads, in one-letter code: Protein C3orf33 (294 aa).

The residue at position 2 (Ala-2) is an N-acetylalanine. A helical membrane pass occupies residues 40-56; that stretch reads ISTGMAIAGIMLLLRSI.

In terms of tissue distribution, highly expressed in ileocecal tissue and endometrium.

Its subcellular location is the membrane. It is found in the secreted. In terms of biological role, secreted protein may play a role in transcription regulation via the MAPK3/MAPK1 pathway through an unidentified receptor on the plasma membrane. The protein is Protein C3orf33 (C3orf33) of Homo sapiens (Human).